Here is a 492-residue protein sequence, read N- to C-terminus: MDLSKYRPSSAYDSPFLTTNAGGPVYNNVSSLTVGPRGPVLLEDYHLIEKLATFVRERIPERVVHARGASAKGFFEVTHDISHLTCADFLRAPGVQTPVICRFSTVVHERGSPESIRDIRGFAVKFYTREGNFDLVGNNVPVFFNRDAKSFPDTIRALKPNPKSHIQENWRILDFFSFLPESLHTFAFFYDDVCLPTDYRHMEGFGVHAYQLINKAGKAHYVKFHWKPTCGVKSMTEEEAIRVGGTNHSHATKDLYDSIAAGNYPEWKLFIQIMNPEDVDKFDFDPLDVTKTWPEDILPLMPVGRLVLNRNIDNFFAENEQLAFNPGHIVPGVYYSEDKLLQTRIFAYADTQRHRIGPNYMQLPVNAPKCAHHNNHRDGAMNFMHRDEEVDYLPSRFDPCRPAEQYPIPSCVLTGRREKCVIPKENNFKQAGERYRSWAPDRQDRYINKWVESLSDPRATHEIRSIWISYLSQADKSCGQKVASRLTVKPTM.

Residues H65 and N138 contribute to the active site. A heme-binding site is contributed by Y348.

This sequence belongs to the catalase family. In terms of assembly, homotetramer. Heme serves as cofactor. As to expression, in stems, leaves, roots and developing fruits.

It is found in the cytoplasm. The protein resides in the cytosol. Its subcellular location is the peroxisome matrix. The enzyme catalyses 2 H2O2 = O2 + 2 H2O. Its function is as follows. Catalyzes the degradation of hydrogen peroxide (H(2)O(2)) generated by peroxisomal oxidases to water and oxygen, thereby protecting cells from the toxic effects of hydrogen peroxide. The sequence is that of Catalase (CAT) from Capsicum annuum (Capsicum pepper).